Consider the following 274-residue polypeptide: Urease accessory protein UreD (274 aa).

It belongs to the UreD family. In terms of assembly, ureD, UreF and UreG form a complex that acts as a GTP-hydrolysis-dependent molecular chaperone, activating the urease apoprotein by helping to assemble the nickel containing metallocenter of UreC. The UreE protein probably delivers the nickel.

The protein resides in the cytoplasm. Functionally, required for maturation of urease via the functional incorporation of the urease nickel metallocenter. In Enterobacter sp. (strain 638), this protein is Urease accessory protein UreD.